Consider the following 370-residue polypeptide: Cobalt-precorrin-5B C(1)-methyltransferase (370 aa).

This sequence belongs to the CbiD family.

The enzyme catalyses Co-precorrin-5B + S-adenosyl-L-methionine = Co-precorrin-6A + S-adenosyl-L-homocysteine. It participates in cofactor biosynthesis; adenosylcobalamin biosynthesis; cob(II)yrinate a,c-diamide from sirohydrochlorin (anaerobic route): step 6/10. In terms of biological role, catalyzes the methylation of C-1 in cobalt-precorrin-5B to form cobalt-precorrin-6A. In Prochlorococcus marinus (strain MIT 9215), this protein is Cobalt-precorrin-5B C(1)-methyltransferase.